Consider the following 145-residue polypeptide: Snaclec salmorin subunit B (145 aa).

Positions 1-23 (MGRFIFVSFGLLVVFVSLSGTGA) are cleaved as a signal peptide. 3 cysteine pairs are disulfide-bonded: Cys25–Cys36, Cys53–Cys141, and Cys118–Cys133. The region spanning 32–142 (YEGHCYKLFN…CRMEAYFVCE (111 aa)) is the C-type lectin domain. Positions 64 and 70 each coordinate Ca(2+). Glu142 contacts Ca(2+).

It belongs to the snaclec family. In terms of assembly, heterodimer of subunits A and B; disulfide-linked. As to expression, expressed by the venom gland.

It localises to the secreted. Functionally, inhibits thrombin-induced fibrinogen clotting and factor Xa-induced prothrombin activation. Binds to thrombin and prothrombin exosites. This is Snaclec salmorin subunit B from Gloydius brevicauda (Korean slamosa snake).